A 60-amino-acid polypeptide reads, in one-letter code: Cytotoxin 3 (60 aa).

Disulfide bonds link cysteine 3-cysteine 21, cysteine 14-cysteine 38, cysteine 42-cysteine 53, and cysteine 54-cysteine 59.

Belongs to the three-finger toxin family. Short-chain subfamily. Type IA cytotoxin sub-subfamily. Monomer in solution; Homodimer and oligomer in the presence of negatively charged lipids forming a pore with a size ranging between 20 and 30 Angstroms. In terms of tissue distribution, expressed by the venom gland.

The protein resides in the secreted. It localises to the target cell membrane. Its function is as follows. Shows cytolytic activity on many different cells by forming pore in lipid membranes. In vivo, increases heart rate or kills the animal by cardiac arrest. In addition, it binds to heparin with high affinity, interacts with Kv channel-interacting protein 1 (KCNIP1) in a calcium-independent manner, and binds to integrin alpha-V/beta-3 (ITGAV/ITGB3) with moderate affinity. This is Cytotoxin 3 from Naja annulifera (Banded Egyptian cobra).